We begin with the raw amino-acid sequence, 501 residues long: 2,3-bisphosphoglycerate-independent phosphoglycerate mutase (501 aa).

Residues Asp-12 and Ser-62 each contribute to the Mn(2+) site. Ser-62 acts as the Phosphoserine intermediate in catalysis. Substrate-binding positions include His-121, 150–151 (RD), Arg-182, Arg-188, 253–256 (RSDR), and Lys-322. Asp-389, His-393, Asp-430, His-431, and His-449 together coordinate Mn(2+).

This sequence belongs to the BPG-independent phosphoglycerate mutase family. Monomer. It depends on Mn(2+) as a cofactor.

The enzyme catalyses (2R)-2-phosphoglycerate = (2R)-3-phosphoglycerate. It functions in the pathway carbohydrate degradation; glycolysis; pyruvate from D-glyceraldehyde 3-phosphate: step 3/5. Functionally, catalyzes the interconversion of 2-phosphoglycerate and 3-phosphoglycerate. The sequence is that of 2,3-bisphosphoglycerate-independent phosphoglycerate mutase from Ehrlichia ruminantium (strain Welgevonden).